The chain runs to 215 residues: Redox-sensing transcriptional repressor Rex 2 (215 aa).

Positions 15 to 54 (VYLRYLKMLGDSGVKRIKSREFSEMIQIPSATIRRDFSHV) form a DNA-binding region, H-T-H motif. An NAD(+)-binding site is contributed by 89 to 94 (GCGNLG).

The protein belongs to the transcriptional regulatory Rex family. As to quaternary structure, homodimer.

Its subcellular location is the cytoplasm. Functionally, modulates transcription in response to changes in cellular NADH/NAD(+) redox state. The chain is Redox-sensing transcriptional repressor Rex 2 from Enterococcus faecalis (strain ATCC 700802 / V583).